The following is a 1782-amino-acid chain: MRPVDFTPSSESPTAEKGMKVVYFGNELPQDGIQGICRRLHTYTKDRRYPLLARFIEESTWAVHDEVRQLHAAQKALVSPFESVLHLAEQPELCRGPLCGSIEGVLLCVIQLGTFIGYYEDSPNEYTFDSANTYLTGLGLGLLASTAVSLSPTLADLPLAGAEVVRVAFRLGVLVADVSQNLQPADATGERDSWAYVIPNVAPKEAEEELAVIHTRENTPEASRIFISAISRTSVTISGPPARLRRLFRMSDFFRDRTFVALPVYGGLCHAKHIYNSQHARSVVQGPSIAALDTRFIARYPILSTGSGEPFPTATTATELFEHVMTEILTQAIEWENVIQGVVERAKLLSVSEVQVQVFRNSHPVHDLLSALETSLREGVEVAIKDLGPWITRTRDEERPPPRGTAQSKIAIVGMSCRMPSGATDTEKFWDILEQGLDVHRKIPPDRFDVDSHYDPAGKRVNASHTPYGCFIDEPGLFDAPFFNMSPREAQQTDPMQRLAIVTAYEALERAGYVANRTRSSNKHRMGTFYGQASDDYREVNSAQEISTYFIPGGCRAFGPGRINYFFKLWGPSFSIDTACSSSLATIQAACTALWNGDTDTVVAGGMNVLTNSDAFAGLSHGHFLTKTPNACKTWDCEADGYCRADGVASIVMKRLEDAEADNDNILGVILGAATNHSAEAISITHPHAGAQSCLSRQVLRSAGIDPMDVSYVEMHGTGTQAGDAEEIKSVSDVFAPAVKRRSSQQPVFIGAVKANVGHGEAVAGVTALVKVLLMFQKEAIPPHVGIKNSINPGFPKDLDQRNLRIPYEKKPWPRRPGRKRIAMVNNFSAAGGNSTLAIEEGPLRPKPAGAIDPRSSHLVTVSAKSKISLKGNLERLLSFLDAHPDVALSDLAYTTTARRHHHNHRVAVATSDIADLKAQLCKTLESDSVNTLQPISATGPPPIAFAFTGQGSSYKSWDLQLFQHSPYFRSQILHLDTLAQGQGFPSFVPAIDGSYPRDHAHCPVITQLALVCTEIALAKYWVSLGVTPDVVVGHSLGEYAALHIAGVLSASDAIFLVGQRACLLQERCQPSSHQMMAVRASLEQIEQFAGSLPYEIACVNGPREMVLSGTREEMAAVARLLEAEGFKCIVLEVAFAFHSAQMDPILDEFEALAASGVVFQAPNLPVISPLLSKVVFDEHTIDSVYMRRATRETVHFLSAMKMAHKISTIDDATVWVEIGPHPVCVNFVRSSLPSTSVTVPSFRRGEDNWVTLTSSLGILHCAGVPVDWNEFHQPFERALRLLDLPTYSWNEKTYWIQYQGNWALTKGNTFYDDEAPQTKALAGLASELRTSTVQQIIHEQYDGAAGSVVMQSDLMQPDFLAAAYGHKMNGRGVVTSSIHADIAFTLGEYLYKKLNPNQEPHMNIANLEVVKALVAQENTKSPQLIQVSASTDNIRSRQAHLKWHNVINGSIEEPFASATVYYEEASDWLASWRPATHLVQGRIHALEQLAEDGVANRFTRRMAYGLFASSLVDYADKYRGMQSVVLHELEAFADVVLTTEKGGTWTVPPYFIDSVAHLAGFIMNVSDANDTNANFCVTPGWSSMRFAAPLLPGSKYRSYVKMIPTVEDNNIYLGDVYILQDETIVGMVGGIKFRRYPRILLNRFFSAPDADARKSTPATSAPAPAPPAGSEALQPKAAPASTPAAPASADAPTTNGVKAAAEPDANSTAAKAIALVATEAGLGLSDLKDSASFSSLGIDSLMSLVISEKFRETLGVTVTGSLFLEYPTVGDLKSWLLEYYS.

The N-terminal acylcarrier protein transacylase domain (SAT) stretch occupies residues 41 to 270; that stretch reads HTYTKDRRYP…ALPVYGGLCH (230 aa). Residues 407-841 form the Ketosynthase family 3 (KS3) domain; it reads QSKIAIVGMS…GGNSTLAIEE (435 aa). Catalysis depends on for beta-ketoacyl synthase activity residues C580, H716, and H759. The tract at residues 946–1266 is malonyl-CoA:ACP transacylase (MAT) domain; that stretch reads FAFTGQGSSY…LGILHCAGVP (321 aa). A product template (PT) domain region spans residues 1331-1648; that stretch reads TSTVQQIIHE…RILLNRFFSA (318 aa). The interval 1335–1468 is N-terminal hotdog fold; that stretch reads QQIIHEQYDG…ATVYYEEASD (134 aa). One can recognise a PKS/mFAS DH domain in the interval 1335–1643; it reads QQIIHEQYDG…FRRYPRILLN (309 aa). The active-site Proton acceptor; for dehydratase activity is H1367. The interval 1495–1643 is C-terminal hotdog fold; it reads VANRFTRRMA…FRRYPRILLN (149 aa). Residue D1554 is the Proton donor; for dehydratase activity of the active site. Positions 1653–1703 are disordered; it reads ARKSTPATSAPAPAPPAGSEALQPKAAPASTPAAPASADAPTTNGVKAAAE. Over residues 1678–1695 the composition is skewed to low complexity; sequence AAPASTPAAPASADAPTT. Positions 1704–1781 constitute a Carrier domain; sequence PDANSTAAKA…DLKSWLLEYY (78 aa). At S1741 the chain carries O-(pantetheine 4'-phosphoryl)serine.

In terms of tissue distribution, specifically expressed in conidia.

The enzyme catalyses holo-[ACP] + 8 malonyl-CoA + 8 H(+) = atrochrysone carboxyl-[ACP] + 8 CO2 + 8 CoA + 2 H2O. It participates in secondary metabolite biosynthesis. Non-reducing polyketide synthase; part of the gene cluster that mediates the biosynthesis of trypacidin, a mycotoxin with antiprotozoal activity and that plays a role in the infection process. The pathway begins with the synthesis of atrochrysone thioester by the polyketide synthase (PKS) tpcC. The atrochrysone carboxyl ACP thioesterase tpcB then breaks the thioester bond and releases the atrochrysone carboxylic acid from tpcC. The decarboxylase tpcK converts atrochrysone carboxylic acid to atrochrysone which is further reduced into emodin anthrone. The next step is performed by the emodin anthrone oxygenase tpcL that catalyzes the oxidation of emodin anthrone to emodin. Emodin O-methyltransferase encoded by tpcA catalyzes methylation of the 8-hydroxy group of emodin to form questin. Ring cleavage of questin by questin oxidase tpcI leads to desmethylsulochrin via several intermediates including questin epoxide. Another methylation step catalyzed by tpcM leads to the formation of sulochrin which is further converted to monomethylsulfochrin by tpcH. Finally, the tpcJ catalyzes the conversion of monomethylsulfochrin to trypacidin. Trypacidin is toxic for human pulmonary and bronchial epithelial cells by initiating the intracellular formation of nitric oxide (NO) and hydrogen peroxide (H(2)O(2)), thus triggering host necrotic cell death. The trypacidin pathway is also able to produce endocrocin via a distinct route from the endocrocin Enc pathway. This is Atrochrysone carboxylic acid synthase from Aspergillus fumigatus (strain ATCC MYA-4609 / CBS 101355 / FGSC A1100 / Af293) (Neosartorya fumigata).